The following is a 223-amino-acid chain: Probable transaldolase (223 aa).

K86 (schiff-base intermediate with substrate) is an active-site residue.

It belongs to the transaldolase family. Type 3B subfamily.

It localises to the cytoplasm. It carries out the reaction D-sedoheptulose 7-phosphate + D-glyceraldehyde 3-phosphate = D-erythrose 4-phosphate + beta-D-fructose 6-phosphate. Its pathway is carbohydrate degradation; pentose phosphate pathway; D-glyceraldehyde 3-phosphate and beta-D-fructose 6-phosphate from D-ribose 5-phosphate and D-xylulose 5-phosphate (non-oxidative stage): step 2/3. Its function is as follows. Transaldolase is important for the balance of metabolites in the pentose-phosphate pathway. This chain is Probable transaldolase (tal), found in Thermoplasma acidophilum (strain ATCC 25905 / DSM 1728 / JCM 9062 / NBRC 15155 / AMRC-C165).